The following is a 391-amino-acid chain: Casein kinase II subunit alpha (391 aa).

The segment at 36 to 41 (QDDYQL) is interaction with beta subunit. Residues 39–324 (YQLVRKLGRG…AREAMEHPYF (286 aa)) form the Protein kinase domain. ATP is bound by residues 45–53 (LGRGKYSEV) and lysine 68. Aspartate 156 serves as the catalytic Proton acceptor. Phosphothreonine; by CDK1 is present on residues threonine 344 and threonine 360. A phosphoserine; by CDK1 mark is found at serine 362 and serine 370.

Belongs to the protein kinase superfamily. Ser/Thr protein kinase family. CK2 subfamily. Heterotetramer composed of two catalytic subunits (alpha chain and/or alpha' chain) and two regulatory subunits (beta chains). The tetramer can exist as a combination of 2 alpha/2 beta, 2 alpha'/2 beta or 1 alpha/1 alpha'/2 beta subunits. Also part of a CK2-SPT16-SSRP1 complex composed of SSRP1, SUPT16H, CSNK2A1, CSNK2A2 and CSNK2B, which forms following UV irradiation. Interacts with RNPS1. Interacts with SNAI1. Interacts with PML. Interacts with CCAR2. Interacts with HIRIP3. Phosphorylated at Thr-344, Thr-360, Ser-362 and Ser-370 by CDK1 in prophase and metaphase and dephosphorylated during anaphase. Phosphorylation does not directly affect casein kinase 2 activity, but may contribute to its regulation by forming binding sites for interacting proteins and/or targeting it to different compartments.

It localises to the nucleus. The catalysed reaction is L-seryl-[protein] + ATP = O-phospho-L-seryl-[protein] + ADP + H(+). It carries out the reaction L-threonyl-[protein] + ATP = O-phospho-L-threonyl-[protein] + ADP + H(+). With respect to regulation, constitutively active protein kinase whose activity is not directly affected by phosphorylation. Seems to be regulated by level of expression and localization. Its function is as follows. Catalytic subunit of a constitutively active serine/threonine-protein kinase complex that phosphorylates a large number of substrates containing acidic residues C-terminal to the phosphorylated serine or threonine. Regulates numerous cellular processes, such as cell cycle progression, apoptosis and transcription, as well as viral infection. May act as a regulatory node which integrates and coordinates numerous signals leading to an appropriate cellular response. During mitosis, functions as a component of the p53/TP53-dependent spindle assembly checkpoint (SAC) that maintains cyclin-B-CDK1 activity and G2 arrest in response to spindle damage. Also required for p53/TP53-mediated apoptosis, phosphorylating 'Ser-392' of p53/TP53 following UV irradiation. Phosphorylates a number of DNA repair proteins in response to DNA damage, such as MDC1, MRE11, RAD9A, RAD51 and HTATSF1, promoting their recruitment to DNA damage sites. Can also negatively regulate apoptosis. Phosphorylates the caspases CASP9 and CASP2 and the apoptotic regulator NOL3. Phosphorylation protects CASP9 from cleavage and activation by CASP8, and inhibits the dimerization of CASP2 and activation of CASP8. Phosphorylates YY1, protecting YY1 from cleavage by CASP7 during apoptosis. Regulates transcription by direct phosphorylation of RNA polymerases I, II, III and IV. Also phosphorylates and regulates numerous transcription factors including NF-kappa-B, STAT1, CREB1, IRF1, IRF2, ATF1, ATF4, SRF, MAX, JUN, FOS, MYC and MYB. Phosphorylates Hsp90 and its co-chaperones FKBP4 and CDC37, which is essential for chaperone function. Mediates sequential phosphorylation of FNIP1, promoting its gradual interaction with Hsp90, leading to activate both kinase and non-kinase client proteins of Hsp90. Regulates Wnt signaling by phosphorylating CTNNB1 and the transcription factor LEF1. Acts as an ectokinase that phosphorylates several extracellular proteins. Plays an important role in the circadian clock function by phosphorylating BMAL1 at 'Ser-90' which is pivotal for its interaction with CLOCK and which controls CLOCK nuclear entry. Phosphorylates FMR1, promoting FMR1-dependent formation of a membraneless compartment. May phosphorylate histone H2A on 'Ser-1'. The polypeptide is Casein kinase II subunit alpha (CSNK2A1) (Bos taurus (Bovine)).